The chain runs to 469 residues: MVRLVCSRILKFPKPYLWSATQTTSRCFNSRAQSHNLITKTITSSLQDVLTRPIWQNRSFVQCRRVSSYAQMVNNHQSVTIETFDALCKQVKIREALEVIDILEDKGYIVDFPRLLGLAKLCGEVEALEEARVVHDCITPLDARSYHTVIEMYSGCRSTDDALNVFNEMPKRNSETWGTMIRCLAKNGEGERAIDMFTRFIEEGNKPDKEIFKAVFFACVSIGDINEGLLHFESMYRDYGMVLSMEDYVNVIEMLAACGHLDEALDFVERMTVEPSVEMWETLMNLCWVQGYLELGDRFAELIKKLDASRMSKESNAGLVAAKASDSAMEKLKELRYCQMIRDDPKKRMHEFRAGDTSHLGTVSAFRSLKVQMLDIGFVPATRVCFVTVEEEEKEEQLLFRSNKLAFAHAIINSEARRPLTVLQNMRTCIDGHNTFKMISLITGRALIQRDKKKYHFYKNGVCSCKDYW.

Residues 1 to 65 (MVRLVCSRIL…QNRSFVQCRR (65 aa)) constitute a mitochondrion transit peptide. PPR repeat units follow at residues 142 to 172 (DARSYHTVIEMYSGCRSTDDALNVFNEMPKR), 173 to 207 (NSETWGTMIRCLAKNGEGERAIDMFTRFIEEGNKP), 208 to 238 (DKEIFKAVFFACVSIGDINEGLLHFESMYRD), and 244 to 274 (SMEDYVNVIEMLAACGHLDEALDFVERMTVE). Residues 375–469 (DIGFVPATRV…NGVCSCKDYW (95 aa)) form a type DYW motif region.

Belongs to the PPR family. PCMP-H subfamily.

It is found in the mitochondrion. The sequence is that of Pentatricopeptide repeat-containing protein At2g34370, mitochondrial (PCMP-H25) from Arabidopsis thaliana (Mouse-ear cress).